The chain runs to 222 residues: Protein THYLAKOID ASSEMBLY 8, chloroplastic (222 aa).

The transit peptide at 1 to 32 directs the protein to the chloroplast; the sequence is MALSLSQTRPPSLSHSHTLSVIVPKRTFVSIR. 2 PPR repeats span residues 115–149 and 150–184; these read DLVLYADIVNALTRNKEFDEIDRLIGEIDGIDQRS and DDKALAKLIRAVVGAERRESVVRVYTLMRESGWGS.

It belongs to the PPR family. P subfamily.

The protein resides in the plastid. It localises to the chloroplast thylakoid membrane. In terms of biological role, essential protein required during embryogenesis. Mediates group II organellar RNA introns splicing (e.g. ycf3-2 and trnA). Binds weakly to specific RNA. Promotes the biogenesis of chloroplast thylakoid membranes. This is Protein THYLAKOID ASSEMBLY 8, chloroplastic from Arabidopsis thaliana (Mouse-ear cress).